Reading from the N-terminus, the 590-residue chain is Protein O-linked-mannose beta-1,4-N-acetylglucosaminyltransferase 2 (590 aa).

Residues M1 to G4 lie on the Cytoplasmic side of the membrane. Residues T5–L25 traverse the membrane as a helical; Signal-anchor for type II membrane protein segment. The Lumenal segment spans residues S26–T590. Residues N98, N275, and N553 are each glycosylated (N-linked (GlcNAc...) asparagine). Residues R494–T590 form the Fibronectin type-III domain.

The protein belongs to the glycosyltransferase 61 family.

The protein localises to the endoplasmic reticulum membrane. The catalysed reaction is 3-O-(alpha-D-mannosyl)-L-threonyl-[protein] + UDP-N-acetyl-alpha-D-glucosamine = 3-O-(N-acetyl-beta-D-glucosaminyl-(1-&gt;4)-alpha-D-mannosyl)-L-threonyl-[protein] + UDP + H(+). Its pathway is protein modification; protein glycosylation. Functionally, O-linked mannose beta-1,4-N-acetylglucosaminyltransferase that transfers UDP-N-acetyl-D-glucosamine to the 4-position of the mannose to generate N-acetyl-D-glucosamine-beta-1,4-O-D-mannosylprotein. Involved in the biosynthesis of the phosphorylated O-mannosyl trisaccharide (N-acetylgalactosamine-beta-3-N-acetylglucosamine-beta-4-(phosphate-6-)mannose), a carbohydrate structure present in alpha-dystroglycan (DAG1), which is required for binding laminin G-like domain-containing extracellular proteins with high affinity. This is Protein O-linked-mannose beta-1,4-N-acetylglucosaminyltransferase 2 (pomgnt2) from Takifugu rubripes (Japanese pufferfish).